The chain runs to 847 residues: Guanine nucleotide exchange factor VAV3 (847 aa).

A Calponin-homology (CH) domain is found at 1 to 119; that stretch reads MEPWKQCAQW…ETLSRLSRTP (119 aa). Tyr-141 bears the Phosphotyrosine mark. The DH domain occupies 192-371; sequence IRSCCLAEIK…KDLAQYVNEV (180 aa). The PH domain occupies 400-502; that stretch reads RPQGDGEIRI…WLEQFEMALS (103 aa). Residues 513–562 form a Phorbol-ester/DAG-type zinc finger; the sequence is FHDFKMHTFTRVTSCKVCQMLLRGTFYQGYLCFKCGARAHKECLGRVDNC. The interval 560-847 is sufficient for interaction with ROS1; sequence DNCGRVNSGE…FPSTYVEEDE (288 aa). An SH3 1 domain is found at 592–660; that stretch reads PGLPKMQVIR…PSDAVKPCPC (69 aa). Residues 672–766 form the SH2 domain; sequence WYAGAMERLQ…TLDTTLQFPY (95 aa). Residues 788–847 enclose the SH3 2 domain; it reads KVLGIAIARYDFCARDMRELSLLKGDVVKIYTKMSANGWWRGEVNGRVGWFPSTYVEEDE.

As to quaternary structure, interacts with the PH domain of SH2B2. Interacts (via SH2 domains) with the phosphorylated form of EPHA2. Interacts with ROS1; constitutive interaction that mediates VAV3 phosphorylation. In terms of processing, phosphorylated. Phosphorylation can be mediated by ROS1. In osteoclasts, undergoes tyrosine phosphorylation in response to CSF1. In terms of tissue distribution, isoform 1 and isoform 3 are widely expressed; both are expressed at very low levels in skeletal muscle. In keratinocytes, isoform 1 is less abundant than isoform 3. Isoform 3 is detected at very low levels, if any, in adrenal gland, bone marrow, spleen, fetal brain and spinal cord; in these tissues, isoform 1 is readily detectable.

Its function is as follows. Exchange factor for GTP-binding proteins RhoA, RhoG and, to a lesser extent, Rac1. Binds physically to the nucleotide-free states of those GTPases. Plays an important role in angiogenesis. Its recruitment by phosphorylated EPHA2 is critical for EFNA1-induced RAC1 GTPase activation and vascular endothelial cell migration and assembly. May be important for integrin-mediated signaling, at least in some cell types. In osteoclasts, along with SYK tyrosine kinase, required for signaling through integrin alpha-v/beta-1 (ITAGV-ITGB1), a crucial event for osteoclast proper cytoskeleton organization and function. This signaling pathway involves RAC1, but not RHO, activation. Necessary for proper wound healing. In the course of wound healing, required for the phagocytotic cup formation preceding macrophage phagocytosis of apoptotic neutrophils. Responsible for integrin beta-2 (ITGB2)-mediated macrophage adhesion and, to a lesser extent, contributes to beta-3 (ITGB3)-mediated adhesion. Does not affect integrin beta-1 (ITGB1)-mediated adhesion. This chain is Guanine nucleotide exchange factor VAV3 (VAV3), found in Homo sapiens (Human).